The sequence spans 390 residues: Chorismate synthase 1 (390 aa).

Residues arginine 39 and arginine 45 each coordinate NADP(+). A disordered region spans residues 95–117 (EQEEKEMKRKVTKPRPGHADLNG). FMN is bound by residues 132–134 (RSS), 253–254 (NA), glycine 298, 313–317 (KPIPT), and arginine 339.

This sequence belongs to the chorismate synthase family. As to quaternary structure, homotetramer. FMNH2 serves as cofactor.

The enzyme catalyses 5-O-(1-carboxyvinyl)-3-phosphoshikimate = chorismate + phosphate. Its pathway is metabolic intermediate biosynthesis; chorismate biosynthesis; chorismate from D-erythrose 4-phosphate and phosphoenolpyruvate: step 7/7. In terms of biological role, catalyzes the anti-1,4-elimination of the C-3 phosphate and the C-6 proR hydrogen from 5-enolpyruvylshikimate-3-phosphate (EPSP) to yield chorismate, which is the branch point compound that serves as the starting substrate for the three terminal pathways of aromatic amino acid biosynthesis. This reaction introduces a second double bond into the aromatic ring system. This is Chorismate synthase 1 from Bacillus cereus (strain ATCC 10987 / NRS 248).